Reading from the N-terminus, the 344-residue chain is Methionine import ATP-binding protein MetN (344 aa).

In terms of domain architecture, ABC transporter spans 7–245 (ISLKKISRCF…PQDDTTIAML (239 aa)). 42 to 49 (GRSGAGKS) contributes to the ATP binding site.

Belongs to the ABC transporter superfamily. Methionine importer (TC 3.A.1.24) family. As to quaternary structure, the complex is composed of two ATP-binding proteins (MetN), two transmembrane proteins (MetI) and a solute-binding protein (MetQ).

It localises to the cell inner membrane. It catalyses the reaction L-methionine(out) + ATP + H2O = L-methionine(in) + ADP + phosphate + H(+). It carries out the reaction D-methionine(out) + ATP + H2O = D-methionine(in) + ADP + phosphate + H(+). Part of the ABC transporter complex MetNIQ involved in methionine import. Responsible for energy coupling to the transport system. This Bartonella henselae (strain ATCC 49882 / DSM 28221 / CCUG 30454 / Houston 1) (Rochalimaea henselae) protein is Methionine import ATP-binding protein MetN.